The chain runs to 400 residues: WW domain-containing transcription regulator protein 1 (400 aa).

Lys-46 is covalently cross-linked (Glycyl lysine isopeptide (Lys-Gly) (interchain with G-Cter in ubiquitin)). The interval 52–117 (FFKEPDSGSH…QQHAHLRQQS (66 aa)) is disordered. The segment covering 61-70 (HSRQSSTDSS) has biased composition (polar residues). Phosphoserine is present on residues Ser-62 and Ser-89. The segment covering 91–110 (PASLQLGPGAGAAGSPAQQH) has biased composition (low complexity). Positions 124–157 (LPLPPGWEMTFTATGQRYFLNHIEKITTWQDPRK) constitute a WW domain. The segment covering 192 to 211 (NHQHQQQMAPTNLSQQNHPT) has biased composition (polar residues). The tract at residues 192-216 (NHQHQQQMAPTNLSQQNHPTQNPPA) is disordered. The tract at residues 222 to 400 (PNALTTQQQQ…NKSEPFLTWL (179 aa)) is required for interaction with PALS1. 2 positions are modified to phosphoserine: Ser-295 and Ser-311. Positions 394-400 (EPFLTWL) match the PDZ-binding motif.

In terms of assembly, binds to SLC9A3R2 via the PDZ motif at the plasma membrane. Binds to YWHAZ in vivo and in vitro through the phosphoserine-binding motif RSHSSP. Interacts (via coiled-coil domain) with SMAD2 (via MH1 domain), SMAD3 and SMAD4. Interacts with MED15. Interacts with PAX8 and NKX2-1. Interacts with TEAD1, TEAD2, TEAD3 and TEAD4. Interacts (via WW domain) with PALS1. Interacts with LATS1. Interacts with YAP1 (when phosphorylated at 'Ser-112'). Interacts (via WW domain) with PRRG4 (via cytoplasmic domain). Interacts (via WW domain) with AMOTL2 (via PPXY motif); the interaction promotes WWTR1/TAZ localization to the cytoplasm and tight junctions, thereby inhibiting its transcriptional coactivator properties. Interacts (via WW domain) with AMOT; the interaction facilitates translocation of WWTR1/TAZ to the cytoplasm. Post-translationally, phosphorylated by LATS2 and STK3/MST2. Phosphorylation by LATS2 results in creation of 14-3-3 binding sites, retention in the cytoplasm, and functional inactivation. Phosphorylation results in the inhibition of transcriptional coactivation through YWHAZ-mediated nuclear export. In terms of processing, ubiquitinated at Lys-46; leading to proteasomal degradation. Deubiquitinated and stabilized by UCHL1 at Lys-46; leading to inhibition of osteoclastogenesis.

The protein localises to the cytoplasm. It localises to the nucleus. It is found in the cell membrane. Its subcellular location is the cell junction. The protein resides in the tight junction. Transcriptional coactivator which acts as a downstream regulatory target in the Hippo signaling pathway that plays a pivotal role in organ size control and tumor suppression by restricting proliferation and promoting apoptosis. The core of this pathway is composed of a kinase cascade wherein STK3/MST2 and STK4/MST1, in complex with its regulatory protein SAV1, phosphorylates and activates LATS1/2 in complex with its regulatory protein MOB1, which in turn phosphorylates and inactivates YAP1 oncoprotein and WWTR1/TAZ. WWTR1 enhances PAX8 and NKX2-1/TTF1-dependent gene activation. In conjunction with YAP1, involved in the regulation of TGFB1-dependent SMAD2 and SMAD3 nuclear accumulation. Plays a key role in coupling SMADs to the transcriptional machinery such as the mediator complex. Regulates embryonic stem-cell self-renewal, promotes cell proliferation and epithelial-mesenchymal transition. This is WW domain-containing transcription regulator protein 1 from Canis lupus familiaris (Dog).